The chain runs to 247 residues: MAEEEQRKKIPLVPENLLKKRKAYQALKATQAKQALLQKKEQRKGKELKFKRLEWFLHDSWRQLRDRVRLRRLEVKPHGLEVPDKHSLAFVVRIERISGVSSVVQRTIARLRLKKIFSGVFMQVTPQTIKTLRIVEPYVTWGFPNLKSVRELILKRGQAKVKNKIIPLTDNTVIEEHLGKFGVICLEDLIHEIAFPGKNFQAISGFLRPFQLSVARHATKNRVGFLKEVGSPGYRGERINQLIRQLN.

It belongs to the universal ribosomal protein uL30 family.

The chain is Large ribosomal subunit protein uL30 (RPL7L1) from Sus scrofa (Pig).